The following is a 789-amino-acid chain: Phenylalanine--tRNA ligase beta subunit (789 aa).

The region spanning Lys38 to Phe151 is the tRNA-binding domain. Residues His398–Glu474 form the B5 domain. The Mg(2+) site is built by Asp452, Asp458, Glu461, and Glu462. In terms of domain architecture, FDX-ACB spans Leu694 to Arg787.

It belongs to the phenylalanyl-tRNA synthetase beta subunit family. Type 1 subfamily. Tetramer of two alpha and two beta subunits. The cofactor is Mg(2+).

It is found in the cytoplasm. The enzyme catalyses tRNA(Phe) + L-phenylalanine + ATP = L-phenylalanyl-tRNA(Phe) + AMP + diphosphate + H(+). The sequence is that of Phenylalanine--tRNA ligase beta subunit from Ehrlichia ruminantium (strain Welgevonden).